The primary structure comprises 484 residues: tRNA sulfurtransferase (484 aa).

The 105-residue stretch at 63–167 (EAFADRLSCI…RENLYLVVNR (105 aa)) folds into the THUMP domain. ATP contacts are provided by residues 185 to 186 (LI), Lys-267, Gly-289, and Gln-298. Cysteines 346 and 458 form a disulfide. Residues 406 to 484 (VNSNEVIIDV…GYENVKVYRP (79 aa)) form the Rhodanese domain. The Cysteine persulfide intermediate role is filled by Cys-458.

It belongs to the ThiI family.

The protein resides in the cytoplasm. The enzyme catalyses [ThiI sulfur-carrier protein]-S-sulfanyl-L-cysteine + a uridine in tRNA + 2 reduced [2Fe-2S]-[ferredoxin] + ATP + H(+) = [ThiI sulfur-carrier protein]-L-cysteine + a 4-thiouridine in tRNA + 2 oxidized [2Fe-2S]-[ferredoxin] + AMP + diphosphate. The catalysed reaction is [ThiS sulfur-carrier protein]-C-terminal Gly-Gly-AMP + S-sulfanyl-L-cysteinyl-[cysteine desulfurase] + AH2 = [ThiS sulfur-carrier protein]-C-terminal-Gly-aminoethanethioate + L-cysteinyl-[cysteine desulfurase] + A + AMP + 2 H(+). Its pathway is cofactor biosynthesis; thiamine diphosphate biosynthesis. Its function is as follows. Catalyzes the ATP-dependent transfer of a sulfur to tRNA to produce 4-thiouridine in position 8 of tRNAs, which functions as a near-UV photosensor. Also catalyzes the transfer of sulfur to the sulfur carrier protein ThiS, forming ThiS-thiocarboxylate. This is a step in the synthesis of thiazole, in the thiamine biosynthesis pathway. The sulfur is donated as persulfide by IscS. This is tRNA sulfurtransferase from Shewanella sediminis (strain HAW-EB3).